The sequence spans 193 residues: MIGRIAGVLLEKNPPHLLVDCNGVGYEVDVPMSTFYNLPSTGERVVLLTQMIVREDAHLLYGFGTAEERSTFRELLKISGIGARMALAVLSGMSVHELAQTVTMQDAARLTRVPGIGKKTAERLLLELKGKIGADLGAMAGAASASDHASDILNALLALGYSEKEALAAVKNVPAGTGVSEGIKLALKALSKG.

The domain I stretch occupies residues 1-64 (MIGRIAGVLL…EDAHLLYGFG (64 aa)). A domain II region spans residues 65–139 (TAEERSTFRE…GKIGADLGAM (75 aa)). A flexible linker region spans residues 139–143 (MAGAA). The segment at 144 to 193 (SASDHASDILNALLALGYSEKEALAAVKNVPAGTGVSEGIKLALKALSKG) is domain III.

It belongs to the RuvA family. As to quaternary structure, homotetramer. Forms an RuvA(8)-RuvB(12)-Holliday junction (HJ) complex. HJ DNA is sandwiched between 2 RuvA tetramers; dsDNA enters through RuvA and exits via RuvB. An RuvB hexamer assembles on each DNA strand where it exits the tetramer. Each RuvB hexamer is contacted by two RuvA subunits (via domain III) on 2 adjacent RuvB subunits; this complex drives branch migration. In the full resolvosome a probable DNA-RuvA(4)-RuvB(12)-RuvC(2) complex forms which resolves the HJ.

The protein resides in the cytoplasm. Its function is as follows. The RuvA-RuvB-RuvC complex processes Holliday junction (HJ) DNA during genetic recombination and DNA repair, while the RuvA-RuvB complex plays an important role in the rescue of blocked DNA replication forks via replication fork reversal (RFR). RuvA specifically binds to HJ cruciform DNA, conferring on it an open structure. The RuvB hexamer acts as an ATP-dependent pump, pulling dsDNA into and through the RuvAB complex. HJ branch migration allows RuvC to scan DNA until it finds its consensus sequence, where it cleaves and resolves the cruciform DNA. The sequence is that of Holliday junction branch migration complex subunit RuvA from Paraburkholderia xenovorans (strain LB400).